Reading from the N-terminus, the 101-residue chain is Small ribosomal subunit protein uS14 (101 aa).

Residues Met-1–Asp-20 are disordered.

This sequence belongs to the universal ribosomal protein uS14 family. Part of the 30S ribosomal subunit. Contacts proteins S3 and S10.

In terms of biological role, binds 16S rRNA, required for the assembly of 30S particles and may also be responsible for determining the conformation of the 16S rRNA at the A site. This Acidiphilium cryptum (strain JF-5) protein is Small ribosomal subunit protein uS14.